The chain runs to 86 residues: UPF0367 protein NATL1_01981 (86 aa).

The protein belongs to the UPF0367 family.

The sequence is that of UPF0367 protein NATL1_01981 from Prochlorococcus marinus (strain NATL1A).